Reading from the N-terminus, the 435-residue chain is AMSH-like protease sst2 (435 aa).

Residues 162 to 181 show a composition bias toward low complexity; that stretch reads TDLLSPDSQKLSKSSSDLPQ. The interval 162 to 185 is disordered; sequence TDLLSPDSQKLSKSSSDLPQFDYP. The residue at position 192 (T192) is a Phosphothreonine. The MPN domain maps to 262-392; sequence TIYLPKLLKK…FRLLDPEGLQ (131 aa). 7 residues coordinate Zn(2+): H341, H343, D354, H356, C397, H404, and H406. The short motif at 341–354 is the JAMM motif element; the sequence is HTHPTQTCFMSSVD.

This sequence belongs to the peptidase M67C family. The cofactor is Zn(2+).

The protein resides in the cytoplasm. The protein localises to the endosome. Functionally, zinc metalloprotease that specifically cleaves 'Lys-63'-linked polyubiquitin chains. Does not cleave 'Lys-48'-linked polyubiquitin chains. Plays a role in the multivesicular body (MVB) sorting pathway. Required for ubiquitin-dependent sorting of proteins into the endosome and subsequent trafficking to the vacuole. May regulate MVB sorting through deubiquitination of ubiquitinated ESCRT proteins. This Schizosaccharomyces pombe (strain 972 / ATCC 24843) (Fission yeast) protein is AMSH-like protease sst2 (sst2).